The following is a 516-amino-acid chain: MRFLLLNRFTLLLLLLVSPTPVLQAPTNLTDSGLDQEPFLYLVGRKKLLDAQYKCYDRIQQLPPYEGEGPYCNRTWDGWMCWDDTPAGVMSYQHCPDYFPDFDPTEKVSKYCDENGEWFRHPDSNRTWSNYTLCNAFTPDKLHNAYVLYYLALVGHSMSIAALIASMGIFLFFKNLSCQRVTLHKNMFLTYILNSIIIIIHLVEVVPNGDLVRRDPMHIFHHNTYMWTMQWELSPPLPLSAHEGKMDPHDSEVISCKILHFFHQYMMACNYFWMLCEGIYLHTLIVMAVFTEDQRLRWYYLLGWGFPIVPTIIHAITRAVYYNDNCWLSTETHLLYIIHGPVMAALVVNFFFLLNIVRVLVTKMRQTHEAEAYMYLKAVKATMVLVPLLGIQFVVFPWRPSNKVLGKIYDYLMHSLIHFQGFFVATIYCFCNHEVQVTLKRQWAQFKIQWSHRWGRRRRPTNRVVSAPRAVAFAEPGGLPIYICHQEPRNPPVSNNEGEEGTEMIPMNVIQQDSSA.

The signal sequence occupies residues 1–24 (MRFLLLNRFTLLLLLLVSPTPVLQ). Topologically, residues 25-146 (APTNLTDSGL…FTPDKLHNAY (122 aa)) are extracellular. 4 N-linked (GlcNAc...) asparagine glycosylation sites follow: Asn28, Asn73, Asn125, and Asn130. Disulfide bonds link Cys55-Cys81, Cys72-Cys112, and Cys95-Cys134. A helical membrane pass occupies residues 147-169 (VLYYLALVGHSMSIAALIASMGI). Residues 170–181 (FLFFKNLSCQRV) are Cytoplasmic-facing. The chain crosses the membrane as a helical span at residues 182-202 (TLHKNMFLTYILNSIIIIIHL). Over 203–256 (VEVVPNGDLVRRDPMHIFHHNTYMWTMQWELSPPLPLSAHEGKMDPHDSEVISC) the chain is Extracellular. The cysteines at positions 256 and 326 are disulfide-linked. The helical transmembrane segment at 257-279 (KILHFFHQYMMACNYFWMLCEGI) threads the bilayer. Residues 280–296 (YLHTLIVMAVFTEDQRL) are Cytoplasmic-facing. The helical transmembrane segment at 297–317 (RWYYLLGWGFPIVPTIIHAIT) threads the bilayer. The Extracellular segment spans residues 318 to 333 (RAVYYNDNCWLSTETH). The chain crosses the membrane as a helical span at residues 334-357 (LLYIIHGPVMAALVVNFFFLLNIV). Over 358–377 (RVLVTKMRQTHEAEAYMYLK) the chain is Cytoplasmic. The chain crosses the membrane as a helical span at residues 378 to 396 (AVKATMVLVPLLGIQFVVF). At 397-404 (PWRPSNKV) the chain is on the extracellular side. A helical membrane pass occupies residues 405-431 (LGKIYDYLMHSLIHFQGFFVATIYCFC). Residues 432-516 (NHEVQVTLKR…MNVIQQDSSA (85 aa)) lie on the Cytoplasmic side of the membrane. The disordered stretch occupies residues 489–516 (RNPPVSNNEGEEGTEMIPMNVIQQDSSA).

Belongs to the G-protein coupled receptor 2 family. As to quaternary structure, heterodimer of CALCR and RAMP1, RAMP2 or RAMP3; the receptor complexes function as AMYR1, AMYR2 and AMYR3 receptors, respectively, and respond to amylin/IAPP, calcitonin/CT and CGRP1 ligands. Interacts with GPRASP2.

The protein resides in the cell membrane. In terms of biological role, g protein-coupled receptor activated by ligand peptides amylin (IAPP), calcitonin (CT/CALCA) and calcitonin gene-related peptide type 1 (CGRP1/CALCA). CALCR interacts with receptor-activity-modifying proteins RAMP1, 2 and 3 to form receptor complexes AMYR1, 2 and 3, respectively. IAPP, CT and CGRP1 activate CALCR and AMYRs with distinct modes of receptor activation resulting in specific phenotypes. Ligand binding causes a conformation change that triggers signaling via guanine nucleotide-binding proteins (G proteins) and modulates the activity of downstream effectors. Activates cAMP-dependent pathway. The sequence is that of Calcitonin receptor from Rattus norvegicus (Rat).